The sequence spans 350 residues: Protein-glutamate methylesterase/protein-glutamine glutaminase 2 (350 aa).

The 119-residue stretch at 3–121 (RVLLVDDSPV…DPDYEEAVSE (119 aa)) folds into the Response regulatory domain. Asp-54 is subject to 4-aspartylphosphate. Positions 158 to 322 (IHQDIRVIVI…SFVYGMPGAA (165 aa)) constitute a CheB-type methylesterase domain. Residues Ser-170, His-197, and Asp-290 contribute to the active site.

The protein belongs to the CheB family. In terms of processing, phosphorylated by CheA. Phosphorylation of the N-terminal regulatory domain activates the methylesterase activity.

The protein localises to the cytoplasm. The enzyme catalyses [protein]-L-glutamate 5-O-methyl ester + H2O = L-glutamyl-[protein] + methanol + H(+). It carries out the reaction L-glutaminyl-[protein] + H2O = L-glutamyl-[protein] + NH4(+). Its function is as follows. Involved in chemotaxis. Part of a chemotaxis signal transduction system that modulates chemotaxis in response to various stimuli. Catalyzes the demethylation of specific methylglutamate residues introduced into the chemoreceptors (methyl-accepting chemotaxis proteins or MCP) by CheR. Also mediates the irreversible deamidation of specific glutamine residues to glutamic acid. The protein is Protein-glutamate methylesterase/protein-glutamine glutaminase 2 of Methanospirillum hungatei JF-1 (strain ATCC 27890 / DSM 864 / NBRC 100397 / JF-1).